Here is an 89-residue protein sequence, read N- to C-terminus: Small ribosomal subunit protein bS20 (89 aa).

Residues 1 to 11 show a composition bias toward basic and acidic residues; the sequence is MANHKSAEKRN. The segment at 1–30 is disordered; sequence MANHKSAEKRNRQNQVARLRNKSTRTAMKN.

Belongs to the bacterial ribosomal protein bS20 family.

Its function is as follows. Binds directly to 16S ribosomal RNA. This chain is Small ribosomal subunit protein bS20, found in Desulfotalea psychrophila (strain LSv54 / DSM 12343).